Consider the following 128-residue polypeptide: Large ribosomal subunit protein bL12 (128 aa).

This sequence belongs to the bacterial ribosomal protein bL12 family. In terms of assembly, homodimer. Part of the ribosomal stalk of the 50S ribosomal subunit. Forms a multimeric L10(L12)X complex, where L10 forms an elongated spine to which 2 to 4 L12 dimers bind in a sequential fashion. Binds GTP-bound translation factors.

Forms part of the ribosomal stalk which helps the ribosome interact with GTP-bound translation factors. Is thus essential for accurate translation. This Kineococcus radiotolerans (strain ATCC BAA-149 / DSM 14245 / SRS30216) protein is Large ribosomal subunit protein bL12.